The primary structure comprises 275 residues: Voltage-dependent calcium channel gamma-7 subunit (275 aa).

4 helical membrane passes run 8 to 28 (ALTLLSSVFGACGLLLVGIAV), 103 to 123 (FPMVSLFLVFTAFVISNIGHI), 129 to 149 (ILAFVSGIFFILSGLSLVVGL), and 179 to 199 (FAFAASSFLLKEGAGVMSVYL). Residues Ser-222, Ser-225, and Ser-273 each carry the phosphoserine modification.

It belongs to the PMP-22/EMP/MP20 family. CACNG subfamily. As to quaternary structure, interacts with CACNA1C. Identified in a complex with the L-type calcium channel subunits CACNA1C, CACNA2D1 and either CACNB1 or CACNB2. Acts as an auxiliary subunit for AMPA-selective glutamate receptors (AMPARs), such as GRIA1 and GRIA2. As to expression, detected in heart left ventricle. Widely expressed.

The protein resides in the cell membrane. Regulates the activity of L-type calcium channels that contain CACNA1C as pore-forming subunit. Regulates the trafficking and gating properties of AMPA-selective glutamate receptors (AMPARs). Promotes their targeting to the cell membrane and synapses and modulates their gating properties by slowing their rates of activation, deactivation and desensitization and by mediating their resensitization. Displays subunit-specific AMPA receptor regulation. Shows specificity only for GRIA1 and GRIA2. The chain is Voltage-dependent calcium channel gamma-7 subunit (CACNG7) from Homo sapiens (Human).